We begin with the raw amino-acid sequence, 529 residues long: Neuronal acetylcholine receptor subunit alpha-2 (529 aa).

Residues 1-26 (MGPSCPVFLSFTKLSLWWLLLTPAGG) form the signal peptide. The tract at residues 27 to 56 (EEAKRPPPRAPGDPLSSPSPTALPQGGSHT) is disordered. The Extracellular segment spans residues 27-264 (EEAKRPPPRA…VTYAFVIRRL (238 aa)). N-linked (GlcNAc...) asparagine glycosylation is found at Asn79 and Asn129. A disulfide bridge links Cys183 with Cys197. N-linked (GlcNAc...) asparagine glycosylation occurs at Asn235. The cysteines at positions 247 and 248 are disulfide-linked. Helical transmembrane passes span 265 to 289 (PLFY…VFYL), 297 to 315 (ITLC…LLIT), and 331 to 352 (YLLF…VLNV). Residues 353-502 (HHRSPSTHTM…WKYVAMVIDR (150 aa)) lie on the Cytoplasmic side of the membrane. A helical transmembrane segment spans residues 503 to 521 (IFLWLFIIVCFLGTIGLFL).

The protein belongs to the ligand-gated ion channel (TC 1.A.9) family. Acetylcholine receptor (TC 1.A.9.1) subfamily. Alpha-2/CHRNA2 sub-subfamily. As to quaternary structure, neuronal AChR is composed of two different types of subunits: alpha and non-alpha (beta). CHRNA2/alpha-2 subunit can be combined to CHRNB2/beta-2 or CHRNB4/beta-4 to give rise to functional receptors. Both CHRNA2:CHRNB2 and CHRNA2:CHRNB4 nAChR complexes are heteropentamers with two subtypes: LS (low agonist sensitivity) with a (CHRNA2)3:(CHRNB2/4)2 and HS (high agonist sensitivity) with a (CHRNA2)2:(CHRNB2/4)3 stoichiometries; the subtypes differ in their subunit binding interfaces which are involved in ligand binding.

Its subcellular location is the synaptic cell membrane. It localises to the cell membrane. The catalysed reaction is Ca(2+)(in) = Ca(2+)(out). It catalyses the reaction K(+)(in) = K(+)(out). It carries out the reaction Na(+)(in) = Na(+)(out). In terms of biological role, component of neuronal acetylcholine receptors (nAChRs) that function as pentameric, ligand-gated cation channels with high calcium permeability among other activities. nAChRs are excitatory neurotrasnmitter receptors formed by a collection of nAChR subunits known to mediate synaptic transmission in the nervous system and the neuromuscular junction. Each nAchR subunit confers differential attributes to channel properties, including activation, deactivation and desensitization kinetics, pH sensitivity, cation permeability, and binding to allosteric modulators. CHRNA2 forms heteropentameric neuronal acetylcholine receptors with CHRNB2 and CHRNB4 and plays a role in nicotine dependence. This chain is Neuronal acetylcholine receptor subunit alpha-2, found in Homo sapiens (Human).